We begin with the raw amino-acid sequence, 445 residues long: DDB1- and CUL4-associated factor 13 (445 aa).

Lys49 is subject to N6-acetyllysine. WD repeat units follow at residues 64 to 104 (GHRD…CIRT), 107 to 146 (AHEGFVRGICTRFCGTSFFTVGDDKTVKQWKMDGPGYGDE), 149 to 191 (PLHT…PICS), 194 to 234 (WGFD…PLKK), 236 to 276 (ILDM…TPVM), 280 to 319 (DHVSAVLDVDYSPTGKEFVSASFDKSIRIFPVDKSRSREV), and 323 to 362 (KRMQHVICVKWTSDSKYIMCGSDEMNIRLWKANASEKLGV). The tract at residues 353–441 (KANASEKLGV…LVSEKKKHVV (89 aa)) is required for nucleolar location.

It belongs to the WD repeat DCAF13/WDSOF1 family. As to quaternary structure, part of the small subunit (SSU) processome, composed of more than 70 proteins and the RNA chaperone small nucleolar RNA (snoRNA) U3. Component of the DCX(DCAF13) E3 ubiquitin ligase complex, at least composed of CUL4 (CUL4A or CUL4B), DDB1, DCAF13 and RBX1. Interacts (via WD40 domain) with DDB1. Interacts with ESR1 and LATS1. As to expression, expressed in the endometrium during decidualization. Expression is down-regulated in preeclampsia decidual tissues.

Its subcellular location is the nucleus. It localises to the nucleolus. It functions in the pathway protein modification; protein ubiquitination. Part of the small subunit (SSU) processome, first precursor of the small eukaryotic ribosomal subunit. During the assembly of the SSU processome in the nucleolus, many ribosome biogenesis factors, an RNA chaperone and ribosomal proteins associate with the nascent pre-rRNA and work in concert to generate RNA folding, modifications, rearrangements and cleavage as well as targeted degradation of pre-ribosomal RNA by the RNA exosome. Participates in the 18S rRNA processing in growing oocytes, being essential for oocyte nonsurrounded nucleolus (NSN) to surrounded nucleolus (SN) transition. In terms of biological role, substrate-recognition component of a DCX (DDB1-CUL4-X-box) E3 ubiquitin-protein ligase complex that plays a key role in embryo preimplantation and is required for normal meiotic cycle progression in oocytes. Acts as a maternal factor that regulates oocyte and zygotic chromatin tightness during maternal to zygotic transition. Also involved in the transformation of the endometrium into the decidua, known as decidualization, providing a solid foundation for implantation of blastocysts. Recognizes the histone methyltransferases SUV39H1 and SUV39H2 and directs them to polyubiquitination and proteasomal degradation, which facilitates the H3K9me3 removal and early zygotic gene expression, essential steps for progressive genome reprogramming and the establishment of pluripotency during preimplantation embryonic development. Supports the spindle assembly and chromosome condensation during oocyte meiotic division by targeting the polyubiquitination and degradation of PTEN, a lipid phosphatase that inhibits PI3K pathway as well as oocyte growth and maturation. Targets PMP22 for polyubiquitination and proteasomal degradation. In Homo sapiens (Human), this protein is DDB1- and CUL4-associated factor 13.